Here is a 289-residue protein sequence, read N- to C-terminus: Homoserine kinase (289 aa).

Pro79–Ser89 provides a ligand contact to ATP.

Belongs to the GHMP kinase family. Homoserine kinase subfamily.

It is found in the cytoplasm. It carries out the reaction L-homoserine + ATP = O-phospho-L-homoserine + ADP + H(+). Its pathway is amino-acid biosynthesis; L-threonine biosynthesis; L-threonine from L-aspartate: step 4/5. Functionally, catalyzes the ATP-dependent phosphorylation of L-homoserine to L-homoserine phosphate. The polypeptide is Homoserine kinase (Streptococcus pneumoniae serotype 2 (strain D39 / NCTC 7466)).